A 165-amino-acid chain; its full sequence is Ribosome maturation factor RimM (165 aa).

The PRC barrel domain maps to 94-165 (EDEFYIADLT…YVILNYQREA (72 aa)).

The protein belongs to the RimM family. Binds ribosomal protein uS19.

Its subcellular location is the cytoplasm. Its function is as follows. An accessory protein needed during the final step in the assembly of 30S ribosomal subunit, possibly for assembly of the head region. Essential for efficient processing of 16S rRNA. May be needed both before and after RbfA during the maturation of 16S rRNA. It has affinity for free ribosomal 30S subunits but not for 70S ribosomes. This chain is Ribosome maturation factor RimM, found in Rickettsia rickettsii (strain Iowa).